The primary structure comprises 287 residues: ATP synthase gamma chain (287 aa).

This sequence belongs to the ATPase gamma chain family. In terms of assembly, F-type ATPases have 2 components, CF(1) - the catalytic core - and CF(0) - the membrane proton channel. CF(1) has five subunits: alpha(3), beta(3), gamma(1), delta(1), epsilon(1). CF(0) has three main subunits: a, b and c.

It localises to the cell membrane. Produces ATP from ADP in the presence of a proton gradient across the membrane. The gamma chain is believed to be important in regulating ATPase activity and the flow of protons through the CF(0) complex. This is ATP synthase gamma chain from Brevibacillus brevis (strain 47 / JCM 6285 / NBRC 100599).